A 185-amino-acid polypeptide reads, in one-letter code: Ribosome-recycling factor (185 aa).

Residues 163–185 (LTNEATKKIDAISKDKEKEITEG) are disordered. Positions 167-185 (ATKKIDAISKDKEKEITEG) are enriched in basic and acidic residues.

It belongs to the RRF family.

The protein localises to the cytoplasm. Functionally, responsible for the release of ribosomes from messenger RNA at the termination of protein biosynthesis. May increase the efficiency of translation by recycling ribosomes from one round of translation to another. The polypeptide is Ribosome-recycling factor (Latilactobacillus sakei subsp. sakei (strain 23K) (Lactobacillus sakei subsp. sakei)).